We begin with the raw amino-acid sequence, 517 residues long: MFS efflux transporter inpD (517 aa).

Residues 1–24 form a disordered region; that stretch reads MEKTQTPSLTPDELSARSSTPFEE. The next 5 helical transmembrane spans lie at 37–57, 59–79, 89–109, 112–132, and 151–171; these read LKFSFIFVGLCLSVFQVALSL, DIGWYGSAYLFTDCAFQLVFG, IVYLGALLLFEIGSIICATAP, IALILGRTIAGIGAGGILSGA, and ILGAVNGIAFICGPLLAGGII. Residue Asn-172 is glycosylated (N-linked (GlcNAc...) asparagine). The next 9 membrane-spanning stretches (helical) occupy residues 178 to 198, 219 to 239, 247 to 267, 292 to 312, 328 to 348, 352 to 372, 381 to 401, 412 to 432, and 485 to 505; these read WIFYINPIISAPTFFITVFLL, LPAFTLFLGSILCLILALLWG, NARIIVLFILFGVIMLAFMLV, FFSFCTSGTGFILEYYLPIWL, LPIIAAAVVFTTLCGILTPVI, VPFMIIATMLLSVGMGLLSTL, VLGFQVPAGVGLGCALQQTLV, IPIGVSLIVLAQTLGGTIALS, and AIVKTWYLSIGLAAASIIGVL.

The protein belongs to the major facilitator superfamily.

It localises to the cell membrane. MFS efflux transporter; part of the inp gene cluster that mediates the biosynthesis of fellutamide B, a mycotoxin that acts as a proteasome inhibitor. In the first step of fellutabmide B biosynthesis inpC activates 3-hydroxydodecanoic acid to generate 3-hydroxydodecanoyl-AMP that is then loaded onto the T0 domain of inpB. The 3-hydroxydodecanoyl-S-phosphopantetheinyl-T0 is sequentially extended with L-Asn and L-Gln by the two CAT modules of inpB. The linear lipodipeptide from inpB is then transferred onto inpA for the addition of the third amino acid, L-Leu. Reductive releasing of the lipotripeptide by the TE domain of inpA produces (2S)-fellutamide B. InpF might be involved in the release and transfer of the lipodipeptide from inpB to inpA. The inp cluster-encoded proteasome subunit inpE confers resistance to internally produced fellutamides. The MFS efflux transporter inpD may contribute to fellutamide resistance as well. The protein is MFS efflux transporter inpD of Emericella nidulans (strain FGSC A4 / ATCC 38163 / CBS 112.46 / NRRL 194 / M139) (Aspergillus nidulans).